Reading from the N-terminus, the 356-residue chain is S-adenosylmethionine:tRNA ribosyltransferase-isomerase (356 aa).

It belongs to the QueA family. In terms of assembly, monomer.

Its subcellular location is the cytoplasm. It catalyses the reaction 7-aminomethyl-7-carbaguanosine(34) in tRNA + S-adenosyl-L-methionine = epoxyqueuosine(34) in tRNA + adenine + L-methionine + 2 H(+). The protein operates within tRNA modification; tRNA-queuosine biosynthesis. Functionally, transfers and isomerizes the ribose moiety from AdoMet to the 7-aminomethyl group of 7-deazaguanine (preQ1-tRNA) to give epoxyqueuosine (oQ-tRNA). The polypeptide is S-adenosylmethionine:tRNA ribosyltransferase-isomerase (Nitrosospira multiformis (strain ATCC 25196 / NCIMB 11849 / C 71)).